Reading from the N-terminus, the 179-residue chain is MKFKPNQTRTYDREGFKKRAACLCFRSEQEDEVLLVSSSRYPDQWIVPGGGVEPEEEPGGAAAREVYEEAGVKGKLGRLLGIFENQDRKHRTYVYVLTVTEILEDWEDSVNIGRKREWFKVEDAIKVLQCHKPVHAEYLERLKLGCSPTNGNSTVPSLPDNNALFVTAAPPSGVPSSIR.

Residues R9, K17 to R19, and S38 to R40 each bind substrate. The Nudix hydrolase domain occupies K17–K143. 2 residues coordinate Mg(2+): G49 and E65. The short motif at G50–G71 is the Nudix box element. E68 serves as the catalytic Proton acceptor. Mg(2+) is bound at residue E69. Substrate is bound by residues R88 to H90, R114, and K132.

It belongs to the Nudix hydrolase family. DIPP subfamily. It depends on Mg(2+) as a cofactor. Requires Mn(2+) as cofactor.

Its subcellular location is the cytoplasm. It catalyses the reaction diphospho-myo-inositol polyphosphate + H2O = myo-inositol polyphosphate + phosphate.. The catalysed reaction is 5-diphospho-1D-myo-inositol 1,2,3,4,6-pentakisphosphate + H2O = 1D-myo-inositol hexakisphosphate + phosphate + H(+). The enzyme catalyses 3,5-bis(diphospho)-1D-myo-inositol 1,2,4,6-tetrakisphosphate + H2O = 3-diphospho-1D-myo-inositol 1,2,4,5,6-pentakisphosphate + phosphate + 2 H(+). It carries out the reaction 5-diphospho-1D-myo-inositol 1,3,4,6-tetrakisphosphate + H2O = 1D-myo-inositol 1,3,4,5,6-pentakisphosphate + phosphate + H(+). It catalyses the reaction P(1),P(6)-bis(5'-adenosyl) hexaphosphate + H2O = 2 ATP + 2 H(+). The catalysed reaction is P(1),P(5)-bis(5'-adenosyl) pentaphosphate + H2O = ADP + ATP + 2 H(+). The enzyme catalyses 5-phospho-alpha-D-ribose 1-diphosphate + H2O = alpha-D-ribose 1,5-bisphosphate + phosphate + H(+). Its function is as follows. Cleaves the beta-phosphate from diphosphoinositol polyphosphates such as PP-InsP5 (diphosphoinositol pentakisphosphate), PP-InsP4 (diphosphoinositol tetrakisphosphate) and [PP]2-InsP4 (bisdiphosphoinositol tetrakisphosphate), suggesting that it may play a role in signal transduction. Diadenosine polyphosphates, particularly Ap6A (P(1),P(6)-bis(5a-adenosyl) hexaphosphate) and Ap5A (P(1),P(5)-bis(5'-adenosyl) pentaphosphate) are downstream effectors of a signaling cascade that regulates cardiac KATP channels, can also be substrates, although with lower preference than the diphosphoinositol polyphosphates. Can also catalyze the hydrolysis of 5-phosphoribose 1-diphosphate, generating the glycolytic activator ribose 1,5-bisphosphate. Does not play a role in U8 snoRNA decapping activity. Binds U8 snoRNA. The chain is Diphosphoinositol polyphosphate phosphohydrolase 2 from Rattus norvegicus (Rat).